A 298-amino-acid polypeptide reads, in one-letter code: uncharacterized protein (298 aa).

The next 10 helical transmembrane spans lie at 9–28 (GYVLGLTAYVIWGLFPLYFK), 38–60 (IIVQRAVWSALFGAVLLLFWKHP), 72–94 (RFVVLAASGLLIASNWMTYVWAV), 104–121 (LGYYINPLINVMLGMLLL), 128–145 (LQWLAVALASLGVAQQVW), 150–167 (LPWVSLVLALTFGFYGLI), 174–196 (AALPGLVVETWLLLPLALVWLLF), 211–233 (PEALWVVAAGPVTLVPLVCFNAA), 240–262 (ATLGFLQYLAPTLVLLQAILLFG), and 272–291 (AFAFIWLALAVYSFDAWRSL). Positions 18-141 (VIWGLFPLYF…AVALASLGVA (124 aa)) constitute an EamA domain.

The protein belongs to the EamA transporter family.

Its subcellular location is the cell membrane. This is an uncharacterized protein from Pseudomonas aeruginosa (strain ATCC 15692 / DSM 22644 / CIP 104116 / JCM 14847 / LMG 12228 / 1C / PRS 101 / PAO1).